The following is a 34-amino-acid chain: uncharacterized protein (34 aa).

Residues 10–30 (LIITSSFFAIAAVLVLSVLLI) traverse the membrane as a helical segment.

The protein localises to the membrane. This is an uncharacterized protein from Escherichia coli O6:H1 (strain CFT073 / ATCC 700928 / UPEC).